A 58-amino-acid polypeptide reads, in one-letter code: Putative calcium channel toxin 196 (58 aa).

The N-terminal stretch at 1–16 is a signal peptide; the sequence is GSLLLVLFLLSVICYA. The propeptide occupies 17–26; it reads EIAAGPTKCQ. 3 cysteine pairs are disulfide-bonded: Cys-25-Cys-38, Cys-31-Cys-43, and Cys-37-Cys-52.

Belongs to the scorpion calcin-like family. KTX subfamily. Expressed by the venom gland.

The protein resides in the secreted. Its function is as follows. May inhibit voltage-gated potassium channels Kv1.1/KCNA1, hKv1.2/KCNA2, and Kv1.3/KCNA3. May also increase intracellular calcium release through the activation of nuclear inositol 1,4,5-trisphosphate receptors (ITPR) of cardiomyocytes, thereby causing an increase in the contraction frequency of these cells. The chain is Putative calcium channel toxin 196 from Lychas mucronatus (Chinese swimming scorpion).